Reading from the N-terminus, the 887-residue chain is Bifunctional uridylyltransferase/uridylyl-removing enzyme (887 aa).

The interval Met1–Ile329 is uridylyltransferase. A uridylyl-removing region spans residues Ile330–Val686. Residues Val448–Leu570 form the HD domain. 2 ACT domains span residues Glu687–Ser772 and Val796–Pro871. The segment at Thr864–Arg887 is disordered.

Belongs to the GlnD family. Requires Mg(2+) as cofactor.

It carries out the reaction [protein-PII]-L-tyrosine + UTP = [protein-PII]-uridylyl-L-tyrosine + diphosphate. The catalysed reaction is [protein-PII]-uridylyl-L-tyrosine + H2O = [protein-PII]-L-tyrosine + UMP + H(+). Its activity is regulated as follows. Uridylyltransferase (UTase) activity is inhibited by glutamine, while glutamine activates uridylyl-removing (UR) activity. Modifies, by uridylylation and deuridylylation, the PII regulatory proteins (GlnB and homologs), in response to the nitrogen status of the cell that GlnD senses through the glutamine level. Under low glutamine levels, catalyzes the conversion of the PII proteins and UTP to PII-UMP and PPi, while under higher glutamine levels, GlnD hydrolyzes PII-UMP to PII and UMP (deuridylylation). Thus, controls uridylylation state and activity of the PII proteins, and plays an important role in the regulation of nitrogen assimilation and metabolism. This Nitrosospira multiformis (strain ATCC 25196 / NCIMB 11849 / C 71) protein is Bifunctional uridylyltransferase/uridylyl-removing enzyme.